Reading from the N-terminus, the 318-residue chain is Ribosomal RNA small subunit methyltransferase H (318 aa).

S-adenosyl-L-methionine-binding positions include 42-44 (GGH), aspartate 62, phenylalanine 86, aspartate 108, and glutamine 115.

The protein belongs to the methyltransferase superfamily. RsmH family.

It is found in the cytoplasm. The catalysed reaction is cytidine(1402) in 16S rRNA + S-adenosyl-L-methionine = N(4)-methylcytidine(1402) in 16S rRNA + S-adenosyl-L-homocysteine + H(+). Its function is as follows. Specifically methylates the N4 position of cytidine in position 1402 (C1402) of 16S rRNA. In Yersinia pestis (strain Pestoides F), this protein is Ribosomal RNA small subunit methyltransferase H.